A 126-amino-acid chain; its full sequence is Small ribosomal subunit protein uS8 (126 aa).

The protein belongs to the universal ribosomal protein uS8 family. In terms of assembly, part of the 30S ribosomal subunit. Contacts proteins S5 and S12.

Its function is as follows. One of the primary rRNA binding proteins, it binds directly to 16S rRNA central domain where it helps coordinate assembly of the platform of the 30S subunit. The protein is Small ribosomal subunit protein uS8 of Oleidesulfovibrio alaskensis (strain ATCC BAA-1058 / DSM 17464 / G20) (Desulfovibrio alaskensis).